An 857-amino-acid chain; its full sequence is Gelation factor (857 aa).

A Blocked amino end (Met) modification is found at methionine 1. The tract at residues 1–250 (MAAAPSGKTW…EKKRRETSDA (250 aa)) is actin-binding. Calponin-homology (CH) domains are found at residues 12 to 117 (DVQK…LRYQ) and 125 to 227 (NSPK…DYAL). The segment at 229–246 (KEKRDADALAALEKKRRE) is regulatory site. 6 Filamin repeats span residues 245 to 346 (RETS…NVKI), 347 to 446 (DGSD…EVKI), 447 to 545 (LNSD…SIHI), 546 to 645 (KPAA…TVTV), 646 to 747 (KPAP…DVKC), and 763 to 837 (FTVA…KQVL). A disordered region spans residues 832–857 (PFKQVLGNPGKKNPEVKSFTTTRTAN).

As to quaternary structure, homodimer.

Its function is as follows. F-actin cross-linking protein. In Dictyostelium discoideum (Social amoeba), this protein is Gelation factor (abpC).